The primary structure comprises 127 residues: NADPH-dependent 7-cyano-7-deazaguanine reductase (127 aa).

The Thioimide intermediate role is filled by C40. Residue D47 is the Proton donor of the active site. Substrate contacts are provided by residues 62-64 (VEL) and 81-82 (HE).

This sequence belongs to the GTP cyclohydrolase I family. QueF type 1 subfamily.

It is found in the cytoplasm. It carries out the reaction 7-aminomethyl-7-carbaguanine + 2 NADP(+) = 7-cyano-7-deazaguanine + 2 NADPH + 3 H(+). It functions in the pathway tRNA modification; tRNA-queuosine biosynthesis. In terms of biological role, catalyzes the NADPH-dependent reduction of 7-cyano-7-deazaguanine (preQ0) to 7-aminomethyl-7-deazaguanine (preQ1). In Campylobacter lari (strain RM2100 / D67 / ATCC BAA-1060), this protein is NADPH-dependent 7-cyano-7-deazaguanine reductase.